Reading from the N-terminus, the 344-residue chain is Methionine import ATP-binding protein MetN (344 aa).

The 240-residue stretch at 2–241 folds into the ABC transporter domain; it reads IKLEKISKIF…PQTQLAKEFI (240 aa). Residue 38-45 participates in ATP binding; the sequence is GASGAGKS.

This sequence belongs to the ABC transporter superfamily. Methionine importer (TC 3.A.1.24) family. In terms of assembly, the complex is composed of two ATP-binding proteins (MetN), two transmembrane proteins (MetI) and a solute-binding protein (MetQ).

It localises to the cell inner membrane. It carries out the reaction L-methionine(out) + ATP + H2O = L-methionine(in) + ADP + phosphate + H(+). The enzyme catalyses D-methionine(out) + ATP + H2O = D-methionine(in) + ADP + phosphate + H(+). Part of the ABC transporter complex MetNIQ involved in methionine import. Responsible for energy coupling to the transport system. The protein is Methionine import ATP-binding protein MetN of Pasteurella multocida (strain Pm70).